Reading from the N-terminus, the 145-residue chain is Group IID secretory phospholipase A2 (145 aa).

Positions 1-20 (MELALLCGLVVMAGVIPIQG) are cleaved as a signal peptide. 7 disulfides stabilise this stretch: Cys46-Cys138, Cys48-Cys64, Cys63-Cys118, Cys69-Cys145, Cys70-Cys111, Cys79-Cys104, and Cys97-Cys109. 3 residues coordinate Ca(2+): His47, Gly49, and Gly51. His67 is a catalytic residue. Residue Asp68 participates in Ca(2+) binding. The N-linked (GlcNAc...) asparagine glycan is linked to Asn89. Asp112 is a catalytic residue.

It belongs to the phospholipase A2 family. It depends on Ca(2+) as a cofactor. In terms of tissue distribution, highly expressed in pancreas and spleen and less abundantly in colon, thymus, placenta, small intestine, and prostate.

The protein localises to the secreted. It catalyses the reaction a 1,2-diacyl-sn-glycero-3-phosphoethanolamine + H2O = a 1-acyl-sn-glycero-3-phosphoethanolamine + a fatty acid + H(+). It carries out the reaction 1-hexadecanoyl-2-(9Z-octadecenoyl)-sn-glycero-3-phosphoethanolamine + H2O = 1-hexadecanoyl-sn-glycero-3-phosphoethanolamine + (9Z)-octadecenoate + H(+). The catalysed reaction is 1-hexadecanoyl-2-(9Z,12Z-octadecadienoyl)-sn-glycero-3-phosphoethanolamine + H2O = 1-hexadecanoyl-sn-glycero-3-phosphoethanolamine + (9Z,12Z)-octadecadienoate + H(+). The enzyme catalyses 1,2-dihexadecanoyl-sn-glycero-3-phospho-(1'-sn-glycerol) + H2O = 1-hexadecanoyl-sn-glycero-3-phospho-(1'-sn-glycerol) + hexadecanoate + H(+). It catalyses the reaction 1-hexadecanoyl-2-(9Z-octadecenoyl)-sn-glycero-3-phospho-(1'-sn-glycerol) + H2O = 1-hexadecanoyl-sn-glycero-3-phospho-(1'-sn-glycerol) + (9Z)-octadecenoate + H(+). It carries out the reaction a 1,2-diacyl-sn-glycero-3-phosphocholine + H2O = a 1-acyl-sn-glycero-3-phosphocholine + a fatty acid + H(+). The catalysed reaction is 1,2-dihexadecanoyl-sn-glycero-3-phosphocholine + H2O = 1-hexadecanoyl-sn-glycero-3-phosphocholine + hexadecanoate + H(+). The enzyme catalyses 1-hexadecanoyl-2-(9Z-octadecenoyl)-sn-glycero-3-phosphocholine + H2O = 1-hexadecanoyl-sn-glycero-3-phosphocholine + (9Z)-octadecenoate + H(+). It catalyses the reaction 1-hexadecanoyl-2-(9Z,12Z-octadecadienoyl)-sn-glycero-3-phosphocholine + H2O = (9Z,12Z)-octadecadienoate + 1-hexadecanoyl-sn-glycero-3-phosphocholine + H(+). It carries out the reaction 1-hexadecanoyl-2-(4Z,7Z,10Z,13Z,16Z,19Z-docosahexaenoyl)-sn-glycero-3-phosphocholine + H2O = (4Z,7Z,10Z,13Z,16Z,19Z)-docosahexaenoate + 1-hexadecanoyl-sn-glycero-3-phosphocholine + H(+). In terms of biological role, secretory calcium-dependent phospholipase A2 that primarily targets extracellular lipids, exerting anti-inflammatory and immunosuppressive functions. Hydrolyzes the ester bond of the fatty acyl group attached at sn-2 position of phospholipids (phospholipase A2 activity) with preference for phosphatidylethanolamines and phosphatidylglycerols over phosphatidylcholines. In draining lymph nodes, selectively hydrolyzes diacyl and alkenyl forms of phosphatidylethanolamines, releasing omega-3 polyunsaturated fatty acids (PUFAs) such as eicosapentaenoate and docosahexaenoate that are precursors of the anti-inflammatory lipid mediators, resolvins. During the resolution phase of acute inflammation drives docosahexaenoate-derived resolvin D1 synthesis, which suppresses dendritic cell activation and T-helper 1 immune response. May act in an autocrine and paracrine manner. Via a mechanism independent of its catalytic activity, promotes differentiation of regulatory T cells (Tregs) and participates in the maintenance of immune tolerance. May contribute to lipid remodeling of cellular membranes and generation of lipid mediators involved in pathogen clearance. Displays bactericidal activity against Gram-positive bacteria by directly hydrolyzing phospholipids of the bacterial membrane. This chain is Group IID secretory phospholipase A2 (PLA2G2D), found in Homo sapiens (Human).